We begin with the raw amino-acid sequence, 292 residues long: Bifunctional protein FolD (292 aa).

Residues 165–167, S190, and T231 each bind NADP(+); that span reads GRS.

It belongs to the tetrahydrofolate dehydrogenase/cyclohydrolase family. In terms of assembly, homodimer.

The enzyme catalyses (6R)-5,10-methylene-5,6,7,8-tetrahydrofolate + NADP(+) = (6R)-5,10-methenyltetrahydrofolate + NADPH. It carries out the reaction (6R)-5,10-methenyltetrahydrofolate + H2O = (6R)-10-formyltetrahydrofolate + H(+). It participates in one-carbon metabolism; tetrahydrofolate interconversion. Its function is as follows. Catalyzes the oxidation of 5,10-methylenetetrahydrofolate to 5,10-methenyltetrahydrofolate and then the hydrolysis of 5,10-methenyltetrahydrofolate to 10-formyltetrahydrofolate. The protein is Bifunctional protein FolD of Arthrobacter globiformis.